Here is a 140-residue protein sequence, read N- to C-terminus: Transmembrane protein 107 (140 aa).

A run of 2 helical transmembrane segments spans residues 7-27 and 53-73; these read LVPS…TLFW and LVAA…GFLS. N-linked (GlcNAc...) asparagine glycosylation is present at N79. Transmembrane regions (helical) follow at residues 83 to 103 and 113 to 133; these read SLLS…FIFE and IFAF…IAVF.

As to quaternary structure, part of the tectonic-like complex (also named B9 complex). Interacts with TMEM237, TMEM231, MKS1 and TMEM216.

Its subcellular location is the membrane. It is found in the cell projection. The protein resides in the cilium. Plays a role in cilia formation and embryonic patterning. Requires for normal Sonic hedgehog (Shh) signaling in the neural tube and acts in combination with GLI2 and GLI3 to pattern ventral and intermediate neuronal cell types. During ciliogenesis regulates the ciliary transition zone localization of some MKS complex proteins. The sequence is that of Transmembrane protein 107 from Rattus norvegicus (Rat).